A 557-amino-acid polypeptide reads, in one-letter code: MPSTLIHDVQKELKDLPARGIVDFLIQYFFEDINWINQIVHPPRLLAQYENWWKMDTITRVADLEFAVLMLRICAYASHFLPSKKYTVDTIKGRPLSDIRSNCDRLAGRLEGICNAAVLRGSLVRVQYMAFTAMCYECDSRIKLSWDTLCCAIREAQEVGLHREPPMRGDDGMDDLEREMRRRMFCNLRLAKALDRVPFLVDAYCTVSLPQMHLHPTIANLQAPDLFTERVLQAQLVRFWKKLEAVNGPPGARPYDPVIAEERYQRFCNEFLPELPAPFALEPNTDWDQHIPELPRQRELFHVALFESVMHNFRQLLRLDQHHLRSLPNSRMALVTQHRHTLATAAMGLFQSVTSLHAMMSFNQTKLSLVIFYHFEMAVVLSLCIIRACDSNGMQDLEHINFFSPHSPLSSNMIDISQSQCLRTIKEARRQLEMMSLGSVMAETGARQLGILVDHVQATLARSGTQTRSMPSTETLTYNSSSSTSYGDGHAHGVSSELPFTFQQQEGPTANAFRTDSNVFEGLMLWDLSTDALPLDPSFLGLEQLHEISELQPNMGL.

Positions I26–C186 are fungal transcription factor domain. A disordered region spans residues S463–H490. A compositionally biased stretch (low complexity) spans S472 to S485.

The protein resides in the nucleus. Functionally, probable transcription factor that regulates the expression of the gene cluster that mediates the biosynthesis of the phytotoxin solanapyrone, a causal agent of early blight disease of potato and tomato. The polypeptide is Probable transcription factor sol4 (sol4) (Alternaria solani).